Consider the following 177-residue polypeptide: Large ribosomal subunit protein uL6 (177 aa).

It belongs to the universal ribosomal protein uL6 family. In terms of assembly, part of the 50S ribosomal subunit.

In terms of biological role, this protein binds to the 23S rRNA, and is important in its secondary structure. It is located near the subunit interface in the base of the L7/L12 stalk, and near the tRNA binding site of the peptidyltransferase center. The sequence is that of Large ribosomal subunit protein uL6 from Xanthobacter autotrophicus (strain ATCC BAA-1158 / Py2).